Consider the following 369-residue polypeptide: Anhydro-N-acetylmuramic acid kinase (369 aa).

12-19 contributes to the ATP binding site; the sequence is GTSLDGVD.

The protein belongs to the anhydro-N-acetylmuramic acid kinase family.

The catalysed reaction is 1,6-anhydro-N-acetyl-beta-muramate + ATP + H2O = N-acetyl-D-muramate 6-phosphate + ADP + H(+). The protein operates within amino-sugar metabolism; 1,6-anhydro-N-acetylmuramate degradation. It functions in the pathway cell wall biogenesis; peptidoglycan recycling. In terms of biological role, catalyzes the specific phosphorylation of 1,6-anhydro-N-acetylmuramic acid (anhMurNAc) with the simultaneous cleavage of the 1,6-anhydro ring, generating MurNAc-6-P. Is required for the utilization of anhMurNAc either imported from the medium or derived from its own cell wall murein, and thus plays a role in cell wall recycling. This Shigella flexneri protein is Anhydro-N-acetylmuramic acid kinase.